Consider the following 312-residue polypeptide: Acetylglutamate kinase (312 aa).

Residues 74–75 (GG), Arg-96, and Asn-195 each bind substrate.

Belongs to the acetylglutamate kinase family. ArgB subfamily.

It is found in the cytoplasm. The enzyme catalyses N-acetyl-L-glutamate + ATP = N-acetyl-L-glutamyl 5-phosphate + ADP. The protein operates within amino-acid biosynthesis; L-arginine biosynthesis; N(2)-acetyl-L-ornithine from L-glutamate: step 2/4. In terms of biological role, catalyzes the ATP-dependent phosphorylation of N-acetyl-L-glutamate. The sequence is that of Acetylglutamate kinase from Nocardioides sp. (strain ATCC BAA-499 / JS614).